The primary structure comprises 571 residues: Septation ring formation regulator EzrA (571 aa).

The Extracellular segment spans residues 1 to 3 (MYY). The chain crosses the membrane as a helical span at residues 4 to 22 (MLIGFIIVVIAVISAGYIL). Residues 23 to 571 (KRKHYQRINE…ESKVSVDDIE (549 aa)) lie on the Cytoplasmic side of the membrane. 5 coiled-coil regions span residues 170-215 (EAKL…QMER), 248-299 (LAQM…TLEH), 326-374 (DALA…ASGE), 400-437 (NFAE…ERER), and 478-529 (RIAE…ENHF).

This sequence belongs to the EzrA family.

It localises to the cell membrane. Functionally, negative regulator of FtsZ ring formation; modulates the frequency and position of FtsZ ring formation. Inhibits FtsZ ring formation at polar sites. Interacts either with FtsZ or with one of its binding partners to promote depolymerization. The sequence is that of Septation ring formation regulator EzrA from Listeria innocua serovar 6a (strain ATCC BAA-680 / CLIP 11262).